Consider the following 873-residue polypeptide: Envelope glycoprotein B (873 aa).

The first 21 residues, 1–21 (MASLKMLICVCVAILIPSTLS), serve as a signal peptide directing secretion. Topologically, residues 22–740 (QDSHGIAGII…SGIASFLSNP (719 aa)) are virion surface. 5 disulfides stabilise this stretch: Cys-67/Cys-525, Cys-84/Cys-481, Cys-157/Cys-219, Cys-311/Cys-359, and Cys-548/Cys-598. N-linked (GlcNAc...) asparagine; by host glycans are attached at residues Asn-92 and Asn-111. The segment at 124–130 (TWALFSR) is involved in fusion and/or binding to host membrane. Asn-201 carries an N-linked (GlcNAc...) asparagine; by host glycan. The interval 206–213 (HQTLGYRT) is involved in fusion and/or binding to host membrane. N-linked (GlcNAc...) asparagine; by host glycosylation is found at Asn-252 and Asn-350. Positions 418 to 447 (QNHLPRGRERRQAAGRRTASLQSGPQGDRI) are disordered. N-linked (GlcNAc...) asparagine; by host glycosylation is found at Asn-569, Asn-625, and Asn-639. Hydrophobic membrane proximal region stretches follow at residues 684 to 738 (IDTV…SFLS) and 715 to 734 (LGTV…SGIA). A helical membrane pass occupies residues 741–761 (FAALGIGIAVVVSIILGLLAF). The Intravirion segment spans residues 762-873 (KYVMNLKSNP…PSWAEESEDE (112 aa)). Positions 781-807 (PPAGTPPRPSRRYYKDEEEVEEDSDED) are disordered. Residues 796-807 (DEEEVEEDSDED) show a composition bias toward acidic residues. The Internalization motif signature appears at 858 to 861 (YPLL).

The protein belongs to the herpesviridae glycoprotein B family. In terms of assembly, homotrimer; disulfide-linked. Binds to heparan sulfate proteoglycans. Interacts with gH/gL heterodimer. A proteolytic cleavage by host furin generates two subunits that remain linked by disulfide bonds.

The protein localises to the virion membrane. Its subcellular location is the host cell membrane. It localises to the host endosome membrane. The protein resides in the host Golgi apparatus membrane. Functionally, envelope glycoprotein that forms spikes at the surface of virion envelope. Essential for the initial attachment to heparan sulfate moieties of the host cell surface proteoglycans. Involved in fusion of viral and cellular membranes leading to virus entry into the host cell. Following initial binding to its host receptors, membrane fusion is mediated by the fusion machinery composed at least of gB and the heterodimer gH/gL. May be involved in the fusion between the virion envelope and the outer nuclear membrane during virion egress. This Infectious laryngotracheitis virus (strain 632) (ILTV) protein is Envelope glycoprotein B.